We begin with the raw amino-acid sequence, 219 residues long: Transcriptional regulatory protein QseB (219 aa).

One can recognise a Response regulatory domain in the interval 2 to 116; it reads RILLIEDDML…EVAARLEALM (115 aa). Asp-51 carries the 4-aspartylphosphate modification. Residues 124–218 constitute a DNA-binding region (ompR/PhoB-type); that stretch reads SNELRHGNVM…VHGIGYTLGE (95 aa).

Phosphorylated by QseC.

Its subcellular location is the cytoplasm. Functionally, member of a two-component regulatory system QseB/QseC. Activates the flagella regulon by activating transcription of FlhDC. Currently it is not known whether this effect is direct or not. This Escherichia coli O157:H7 protein is Transcriptional regulatory protein QseB (qseB).